The chain runs to 229 residues: Coiled-coil domain-containing protein 134 (229 aa).

The signal sequence occupies residues 1–22 (MDLLQFLAAFSVLLWPGTEVTG). A glycan (N-linked (GlcNAc...) asparagine) is linked at Asn-148. The disordered stretch occupies residues 182–229 (FKTDQTEFIPSTDPFQKALREEEKRRKKEERRKEIRKGPRISRSQSEL). Positions 196 to 218 (FQKALREEEKRRKKEERRKEIRK) form a coiled coil. Positions 226-229 (QSEL) match the Prevents secretion from ER motif.

It belongs to the CCDC134 family. As to quaternary structure, interacts with TADA2A. Associates with the PCAF complex via TADA2A binding. O-glycosylated, with additional sialic acid modifications.

It is found in the endoplasmic reticulum lumen. It localises to the secreted. Its subcellular location is the cytoplasm. The protein resides in the nucleus. Its function is as follows. Molecular adapter required to prevent protein hyperglycosylation of HSP90B1: during translation, associates with nascent HSP90B1 and the STT3A catalytic component of the OST-A complex and tethers them to a specialized translocon that forms a microenvironment for HSP90B1 folding. In the CCDC134-containing translocon, STT3A associates with the SRT pseudosubstrate motif of HSP90B1, preventing access to facultative glycosylation sites until folding is completed, preventing hyperglycosylation and subsequent degradation of HSP90B1. In extracellular secreted form, promotes proliferation and activation of CD8(+) T-cells, suggesting a cytokine-like function. May inhibit ERK and JNK signaling activity. May suppress cell migration and invasion activity, via its effects on ERK and JNK signaling. May also localize in the nucleus: enhances stability of the PCAF histone acetyltransferase (HAT) complex member TADA2A and thus promotes PCAF-mediated histone acetyltransferase activity. Has a critical role in the regulation of osteogenesis and bone development. The protein is Coiled-coil domain-containing protein 134 (Ccdc134) of Mus musculus (Mouse).